The sequence spans 662 residues: Potassium channel KAT3 (662 aa).

Residues 1-90 are Cytoplasmic-facing; the sequence is MSTTTTEARS…HFDRRYRLWE (90 aa). The helical transmembrane segment at 91-111 threads the bilayer; it reads LFLVILVGYSAWASLFELAFE. Residues 112–118 are Extracellular-facing; that stretch reads KAAEGAL. A helical transmembrane segment spans residues 119 to 139; the sequence is LTIDLVVDFFFAVDIILTFFV. Residues 140 to 163 are Cytoplasmic-facing; the sequence is SYLDNTTYLNVTDHKLIAKRYLKS. A helical membrane pass occupies residues 164-184; it reads VAFVMDVASTLPIQFIYKTIT. Topologically, residues 185 to 194 are extracellular; it reads GDVGRGQAFG. The helical; Voltage-sensor transmembrane segment at 195–215 threads the bilayer; it reads FLNLLRLWRLRRVAELFKRLE. At 216–229 the chain is on the cytoplasmic side; sequence KDAHFNYFVIRVIK. The helical transmembrane segment at 230–250 threads the bilayer; the sequence is LLCVTIFWIHLAGCILYWIAY. Over 251–277 the chain is Extracellular; sequence HYPRPTDTWIGSQVEDFKERSVWLGYT. Residues 278–297 constitute an intramembrane region (pore-forming); sequence YSMYWSIVTLTTVGYGDLHA. The Extracellular portion of the chain corresponds to 298–301; that stretch reads VNSR. The chain crosses the membrane as a helical span at residues 302–322; the sequence is EKTFNMFYMLFNIGLTSYIIG. At 323 to 662 the chain is on the cytoplasmic side; the sequence is IMTNLVVHGA…LRENDHLYIF (340 aa). 406-527 provides a ligand contact to a nucleoside 3',5'-cyclic phosphate; it reads LFKGFPEGLL…MIIANFMTYL (122 aa). A coiled-coil region spans residues 528–558; the sequence is KGLNDELKKEIPFLRDLLDDADAQVQETVQS. A KHA domain is found at 591 to 662; sequence RVIIHGQAPP…LRENDHLYIF (72 aa).

The protein belongs to the potassium channel family. Plant (TC 1.A.1.4) subfamily. The potassium channel is probably composed of a homo- or heterotetrameric complex of pore-forming subunits. May interact with AKT1 and AKT2. Interacts with SLAC1. Expressed predominantly in root hairs and root endodermis and, at a lower level, in leaf nodes, trichomes, and hydathodes.

It is found in the membrane. In terms of biological role, probable modulatory (alpha) subunit of inward-rectifying potassium channels. Could mediate potassium uptake from the soil solution by plant roots in association with AKT1. In Arabidopsis thaliana (Mouse-ear cress), this protein is Potassium channel KAT3 (KAT3).